We begin with the raw amino-acid sequence, 198 residues long: Small ribosomal subunit protein uS7 (198 aa).

Belongs to the universal ribosomal protein uS7 family. Part of the 30S ribosomal subunit.

In terms of biological role, one of the primary rRNA binding proteins, it binds directly to 16S rRNA where it nucleates assembly of the head domain of the 30S subunit. Is located at the subunit interface close to the decoding center. The protein is Small ribosomal subunit protein uS7 of Desulfurococcus mucosus (Desulfurococcus mobilis).